The sequence spans 227 residues: Phosphatidylethanolamine-binding protein 4 (227 aa).

Positions 1-22 (MGWTMRLVTAALLLGLMMVVTG) are cleaved as a signal peptide. N-linked (GlcNAc...) (complex) asparagine glycosylation occurs at Asn-169. The tract at residues 188–227 (EPEASTQFMTQNYQDSPTLQAPRERASEPKHKNQAEIAAC) is important for secretion. The interval 202 to 227 (DSPTLQAPRERASEPKHKNQAEIAAC) is disordered. Positions 209–221 (PRERASEPKHKNQ) are enriched in basic and acidic residues.

The protein belongs to the phosphatidylethanolamine-binding protein family.

Its subcellular location is the secreted. Its function is as follows. Promotes AKT phosphorylation, suggesting a possible role in the PI3K-AKT signaling pathway. The chain is Phosphatidylethanolamine-binding protein 4 (PEBP4) from Homo sapiens (Human).